We begin with the raw amino-acid sequence, 246 residues long: uncharacterized protein (246 aa).

This is an uncharacterized protein from Acanthamoeba polyphaga (Amoeba).